A 76-amino-acid polypeptide reads, in one-letter code: Omega-conotoxin-like TxO2 (76 aa).

An N-terminal signal peptide occupies residues 1–22 (MKLTCVVIVAVLFLTAWTFVTA). Positions 23–52 (APHSSNALENLYLKAHHEMNNPEDSELNKR) are excised as a propeptide. Cystine bridges form between cysteine 53–cysteine 67, cysteine 60–cysteine 71, and cysteine 66–cysteine 75.

The protein belongs to the conotoxin O1 superfamily. As to expression, expressed by the venom duct.

The protein resides in the secreted. Omega-conotoxins act at presynaptic membranes, they bind and block voltage-gated calcium channels (Cav). The protein is Omega-conotoxin-like TxO2 of Conus textile (Cloth-of-gold cone).